A 355-amino-acid chain; its full sequence is Cyanide hydratase (355 aa).

A CN hydrolase domain is found at 6 to 286 (YKAAAVTSEP…GLLFVDIDLN (281 aa)). Glu-46 acts as the Proton acceptor in catalysis. The active site involves Lys-128. The active-site Nucleophile is Cys-163.

This sequence belongs to the carbon-nitrogen hydrolase superfamily. Nitrilase family. As to quaternary structure, oligomer of dimers, forming left-handed helical fibers.

It carries out the reaction formamide = hydrogen cyanide + H2O. Functionally, catalyzes the hydration of cyanide to formamide. Degradation of cyanide may be important for plant pathogenic fungi in infection of cyanogenic plants. Also has low but significant nitrilase activity with acetonitrile, propionitrile and benzonitrile. The polypeptide is Cyanide hydratase (Gibberella baccata (Fusarium lateritium)).